The following is a 141-amino-acid chain: Hemoglobin subunit alpha-1 (141 aa).

The Globin domain maps to 1-141 (VLSEGNKKAI…VTYQLSSLYR (141 aa)). His59 contributes to the O2 binding site. His88 serves as a coordination point for heme b.

The protein belongs to the globin family. Heterotetramer of two alpha chains and two beta chains. Red blood cells.

Involved in oxygen transport from the lung to the various peripheral tissues. In Torpedo marmorata (Marbled electric ray), this protein is Hemoglobin subunit alpha-1.